The primary structure comprises 466 residues: Asparagine--tRNA ligase (466 aa).

This sequence belongs to the class-II aminoacyl-tRNA synthetase family. In terms of assembly, homodimer.

It is found in the cytoplasm. It catalyses the reaction tRNA(Asn) + L-asparagine + ATP = L-asparaginyl-tRNA(Asn) + AMP + diphosphate + H(+). The polypeptide is Asparagine--tRNA ligase (Escherichia coli O157:H7).